The sequence spans 293 residues: D-alanine--D-alanine ligase (293 aa).

The ATP-grasp domain maps to 98-291 (KIIWKQHNLT…FNKLVVAIIN (194 aa)). 124-177 (DFPLPWMVKPTLEGSSIGISKVDSQIQLNNALMLAWQYNSHALIEQWIEGDEYT) contributes to the ATP binding site. Residues D245, E258, and N260 each coordinate Mg(2+).

It belongs to the D-alanine--D-alanine ligase family. Mg(2+) is required as a cofactor. Mn(2+) serves as cofactor.

It localises to the cytoplasm. It carries out the reaction 2 D-alanine + ATP = D-alanyl-D-alanine + ADP + phosphate + H(+). It participates in cell wall biogenesis; peptidoglycan biosynthesis. Functionally, cell wall formation. The chain is D-alanine--D-alanine ligase from Ruthia magnifica subsp. Calyptogena magnifica.